Consider the following 729-residue polypeptide: Fatty acid oxidation complex subunit alpha (729 aa).

The enoyl-CoA hydratase/isomerase stretch occupies residues Met1–Lys189. Asp296 contributes to the substrate binding site. The 3-hydroxyacyl-CoA dehydrogenase stretch occupies residues Glu311–Ala729. NAD(+) is bound by residues Met324, Asp343, Val400 to Glu402, Lys407, and Ser429. The active-site For 3-hydroxyacyl-CoA dehydrogenase activity is His450. Position 453 (Asn453) interacts with NAD(+). 2 residues coordinate substrate: Asn500 and Tyr660. The interval Arg708 to Ala729 is disordered.

This sequence in the N-terminal section; belongs to the enoyl-CoA hydratase/isomerase family. It in the C-terminal section; belongs to the 3-hydroxyacyl-CoA dehydrogenase family. As to quaternary structure, heterotetramer of two alpha chains (FadB) and two beta chains (FadA).

It catalyses the reaction a (3S)-3-hydroxyacyl-CoA + NAD(+) = a 3-oxoacyl-CoA + NADH + H(+). The catalysed reaction is a (3S)-3-hydroxyacyl-CoA = a (2E)-enoyl-CoA + H2O. The enzyme catalyses a 4-saturated-(3S)-3-hydroxyacyl-CoA = a (3E)-enoyl-CoA + H2O. It carries out the reaction (3S)-3-hydroxybutanoyl-CoA = (3R)-3-hydroxybutanoyl-CoA. It catalyses the reaction a (3Z)-enoyl-CoA = a 4-saturated (2E)-enoyl-CoA. The catalysed reaction is a (3E)-enoyl-CoA = a 4-saturated (2E)-enoyl-CoA. It functions in the pathway lipid metabolism; fatty acid beta-oxidation. Involved in the aerobic and anaerobic degradation of long-chain fatty acids via beta-oxidation cycle. Catalyzes the formation of 3-oxoacyl-CoA from enoyl-CoA via L-3-hydroxyacyl-CoA. It can also use D-3-hydroxyacyl-CoA and cis-3-enoyl-CoA as substrate. This is Fatty acid oxidation complex subunit alpha from Escherichia coli (strain UTI89 / UPEC).